Consider the following 723-residue polypeptide: Hypoxia-inducible factor prolyl hydroxylase (723 aa).

8 residues coordinate Zn(2+): cysteine 39, cysteine 42, cysteine 54, cysteine 57, cysteine 63, histidine 67, histidine 75, and cysteine 79. An MYND-type; atypical zinc finger spans residues 39-79 (CTYCGSSCTSSQLQTCLFCGTVAYCSKEHQQLDWLTHKMIC). A compositionally biased stretch (low complexity) spans 249 to 270 (PSTASTATIPPPATTTSSATSS). Disordered regions lie at residues 249 to 275 (PSTA…KSET) and 294 to 323 (IETE…KINY). A Fe2OG dioxygenase domain is found at 468-566 (GRSRAMLAIY…RFAITIWYMD (99 aa)). Positions 487, 489, and 548 each coordinate Fe cation. Arginine 557 serves as a coordination point for 2-oxoglutarate. A disordered region spans residues 678-723 (RTTSLQSISDHFRSERSHERRSSTSSDQDLDEGLPPPPSTNPEYYI). Basic and acidic residues predominate over residues 687 to 699 (DHFRSERSHERRS).

In terms of assembly, interacts (via catalytic domain) with lin-10 (via N-terminus); the interaction regulates lin-10 subcellular localization; the interaction is direct. Interacts (via catalytic domain) with swan-1 (via WD 1-3 repeats); the interaction may regulate vhl-1-independent hif-1 transcriptional activity; the interaction is direct. Interacts (via C-terminus) with cysl-1; the interaction is enhanced by hydrogen disulfide and activates hif-1-mediated transcription; the interaction is direct. Fe(2+) serves as cofactor. L-ascorbate is required as a cofactor. As to expression, in larvae and adults, expressed in pharyngeal and body wall muscles.

It localises to the cytoplasm. It is found in the nucleus. The protein resides in the cell projection. Its subcellular location is the dendrite. The protein localises to the axon. It carries out the reaction L-prolyl-[hypoxia-inducible factor alpha subunit] + 2-oxoglutarate + O2 = trans-4-hydroxy-L-prolyl-[hypoxia-inducible factor alpha subunit] + succinate + CO2. Its activity is regulated as follows. Inhibited by Co(2+) and dimethyloxalylglycine. Inhibited by the iron chelator 2, 2'-dipyridyl. Its function is as follows. Cellular oxygen sensor which regulates the stability and the activity of hypoxia-inducible transcription factor, hif-1. In normoxic conditions, hydroxylates hif-1 targeting it for vhl-1-mediated proteasomal degradation. In addition, regulates hif-1 transcriptional activity in a vhl-1-independent manner and independently of its hydroxylase activity. By regulating hif-1 activity, controls several cellular responses. Mediates susceptibility to B.thuringiensis and V.cholerae pore-forming toxins and enteropathogenic E.coli. Mediates susceptibility to P.aeruginosa PAO1-mediated killing by regulating resistance to cyanide produced by P.aeruginosa. Mediates resistance to S.aureus-mediated killing. In addition, plays a role in heat acclimation, neuronal development, behavioral responses to reoxygenation and hydrogen sulfide, iron homeostasis and aging. In neurons, involved in mitochondrion fusion during reoxygenation. Involved in egg laying. Regulates the trafficking of the glutamate receptor glr-1, probably independently of hif-1, by regulating lin-10 subcellular localization in response to oxygen levels. May hydroxylate lin-10. This is Hypoxia-inducible factor prolyl hydroxylase from Caenorhabditis elegans.